Consider the following 597-residue polypeptide: MAELPMSTHLFARLLSRVHAVCAALIEEGALPAGIDLSRVVVEPPKDASHGDMATNAAMVLAKDAKAKPRDLADKIADKLRAEELIDQVAIAGPGFINLTLKPAVWAEALRAVLDAGAGYGRSTVGGGEKVNVEYVSANPTGPMHVGHCRGAVFGDALANLLDTAGYDVTREYYINDAGAQVDVLARSAFLRYREALGETIGEIPEGLYPGDYLKPVGEALKAEHGAALKDMPEAQWLPTVRATAIAMMMEAIKGDLAALNITHEVFFSERSLIEGGRNRVAETIEFLRAKGDVYQGRLPPPKGAPVEDYEDREQTLFRATAYGDDVDRPLLKSDGSYTYFASDIAYHKVKFDAGFANMVDVWGADHGGYIKRMQAAIQAVTAGKGALDVKIVQLVRLLRNGEPVKMSKRAGDFVTLREVVDEVGSDAVRFMMLFRKNDAVLDFDLAKVIEQSKDNPVFYVQYGHARGHSIFRNAREVVPDLPEDSKARAAMLRQAPLERLNDPAELELLKRLALYPRIVEAAAQAHEPHRIAFYLNELASEFHALWTHGRDLPHLRFIINNDAEITRARLAMVQGVVSVLASGLAILGVTAPDEMR.

A 'HIGH' region motif is present at residues 138–148 (ANPTGPMHVGH).

It belongs to the class-I aminoacyl-tRNA synthetase family. As to quaternary structure, monomer.

The protein localises to the cytoplasm. The enzyme catalyses tRNA(Arg) + L-arginine + ATP = L-arginyl-tRNA(Arg) + AMP + diphosphate. This is Arginine--tRNA ligase from Rhodopseudomonas palustris (strain ATCC BAA-98 / CGA009).